Consider the following 163-residue polypeptide: MFKKSSQLFSLVFFTIFSIFIGTASAIDLDEATRTVVVDSSGKTIVLTPEQVKRGKRLFNATCGACHVGGVTKTNPNVGLDPEALSLATPRRDNIAGLVDFLKNPTTYDGLESIAEVHPSIKSADIYPRMRSVTDEDLTAMAGHILLQPKIVTEKWGGGKIYY.

The first 26 residues, 1–26 (MFKKSSQLFSLVFFTIFSIFIGTASA), serve as a signal peptide directing secretion. Residues Cys-63, Cys-66, His-67, and Met-130 each contribute to the heme c site.

Belongs to the cytochrome c family. PsbV subfamily. As to quaternary structure, PSII is composed of 1 copy each of membrane proteins PsbA, PsbB, PsbC, PsbD, PsbE, PsbF, PsbH, PsbI, PsbJ, PsbK, PsbL, PsbM, PsbT, PsbY, PsbZ, Psb30/Ycf12, at least 3 peripheral proteins of the oxygen-evolving complex and a large number of cofactors. It forms dimeric complexes. It depends on heme c as a cofactor.

The protein localises to the plastid. It localises to the chloroplast thylakoid membrane. In terms of biological role, one of the extrinsic, lumenal subunits of photosystem II (PSII). PSII is a light-driven water plastoquinone oxidoreductase, using light energy to abstract electrons from H(2)O, generating a proton gradient subsequently used for ATP formation. The extrinsic proteins stabilize the structure of photosystem II oxygen-evolving complex (OEC), the ion environment of oxygen evolution and protect the OEC against heat-induced inactivation. This is Photosystem II extrinsic protein V from Phaeodactylum tricornutum (strain CCAP 1055/1).